A 153-amino-acid chain; its full sequence is FAD synthase (153 aa).

ATP-binding positions include 9 to 10 (TF), 14 to 17 (HPGH), asparagine 92, and tyrosine 119.

The protein belongs to the archaeal FAD synthase family. As to quaternary structure, homodimer. A divalent metal cation serves as cofactor.

It catalyses the reaction FMN + ATP + H(+) = FAD + diphosphate. The protein operates within cofactor biosynthesis; FAD biosynthesis; FAD from FMN: step 1/1. In terms of biological role, catalyzes the transfer of the AMP portion of ATP to flavin mononucleotide (FMN) to produce flavin adenine dinucleotide (FAD) coenzyme. In Methanosphaerula palustris (strain ATCC BAA-1556 / DSM 19958 / E1-9c), this protein is FAD synthase.